The primary structure comprises 390 residues: Chorismate synthase (390 aa).

NADP(+) is bound by residues Arg-39 and Arg-45. FMN is bound by residues 132 to 134 (RSS), 253 to 254 (NA), Gly-298, 313 to 317 (KPIPT), and Arg-339.

The protein belongs to the chorismate synthase family. In terms of assembly, homotetramer. It depends on FMNH2 as a cofactor.

It catalyses the reaction 5-O-(1-carboxyvinyl)-3-phosphoshikimate = chorismate + phosphate. It participates in metabolic intermediate biosynthesis; chorismate biosynthesis; chorismate from D-erythrose 4-phosphate and phosphoenolpyruvate: step 7/7. Catalyzes the anti-1,4-elimination of the C-3 phosphate and the C-6 proR hydrogen from 5-enolpyruvylshikimate-3-phosphate (EPSP) to yield chorismate, which is the branch point compound that serves as the starting substrate for the three terminal pathways of aromatic amino acid biosynthesis. This reaction introduces a second double bond into the aromatic ring system. The sequence is that of Chorismate synthase from Bacillus pumilus (strain SAFR-032).